Reading from the N-terminus, the 644-residue chain is Macrolide export ATP-binding/permease protein MacB (644 aa).

The region spanning 6 to 244 is the ABC transporter domain; it reads LELDGVWRRF…SQATEAQPDG (239 aa). An ATP-binding site is contributed by 42–49; it reads GASGSGKS. 5 consecutive transmembrane segments (helical) span residues 271 to 291, 415 to 435, 517 to 537, 574 to 594, and 609 to 629; these read ALTM…IAIG, EAVG…GVVA, LSLL…IGVM, LVCL…SFVF, and VIAL…FLPA.

It belongs to the ABC transporter superfamily. Macrolide exporter (TC 3.A.1.122) family. As to quaternary structure, homodimer.

The protein localises to the cell inner membrane. Non-canonical ABC transporter that contains transmembrane domains (TMD), which form a pore in the inner membrane, and an ATP-binding domain (NBD), which is responsible for energy generation. Confers resistance against macrolides. This is Macrolide export ATP-binding/permease protein MacB from Chromobacterium violaceum (strain ATCC 12472 / DSM 30191 / JCM 1249 / CCUG 213 / NBRC 12614 / NCIMB 9131 / NCTC 9757 / MK).